The sequence spans 395 residues: MSVIPSPRPVSTLEPDNDFRDIHNWTELLHLFNQTFTDCHIEFNENTKHVVLFVFYLAIFVVGLVENVLVICVNCRRSGRVGMLNLYILNMAIADLGIILSLPVWMLEVMLEYTWLWGSFSCRFIHYFYLVNMYSSIFFLTCLSIDRYVTLTNTSPSWQRHQHRIRRAVCAGVWVLSAIIPLPEVVHIQLLDGSEPMCLFLAPFETYSAWALAVALSATILGFLLPFLLIAVFNILTACRLRRQRQTESRRHCLLMWAYIVVFAICWLPYQVTMLLLTLHGTHIFLHCHLVNLLYFFYEIIDCFSMLHCVANPILYNFLSPSFRGRLLSLVVRYLPKEQARAAGGRASSSSSTQHSIIITKEGSLPLQRISTPTPSETFRRPLRLQTPHLHSAIL.

Residues 1-53 are Extracellular-facing; it reads MSVIPSPRPVSTLEPDNDFRDIHNWTELLHLFNQTFTDCHIEFNENTKHVVLF. 2 N-linked (GlcNAc...) asparagine glycosylation sites follow: N24 and N33. The chain crosses the membrane as a helical span at residues 54 to 75; sequence VFYLAIFVVGLVENVLVICVNC. Residues 76–86 lie on the Cytoplasmic side of the membrane; it reads RRSGRVGMLNL. Residues 87–109 traverse the membrane as a helical segment; sequence YILNMAIADLGIILSLPVWMLEV. At 110–123 the chain is on the extracellular side; sequence MLEYTWLWGSFSCR. C122 and C198 are oxidised to a cystine. A helical transmembrane segment spans residues 124 to 145; sequence FIHYFYLVNMYSSIFFLTCLSI. Residues 146–166 lie on the Cytoplasmic side of the membrane; that stretch reads DRYVTLTNTSPSWQRHQHRIR. A helical transmembrane segment spans residues 167–189; that stretch reads RAVCAGVWVLSAIIPLPEVVHIQ. Over 190–213 the chain is Extracellular; the sequence is LLDGSEPMCLFLAPFETYSAWALA. Residues 214–235 form a helical membrane-spanning segment; that stretch reads VALSATILGFLLPFLLIAVFNI. The Cytoplasmic segment spans residues 236 to 254; that stretch reads LTACRLRRQRQTESRRHCL. The helical transmembrane segment at 255–276 threads the bilayer; that stretch reads LMWAYIVVFAICWLPYQVTMLL. The Extracellular segment spans residues 277 to 295; that stretch reads LTLHGTHIFLHCHLVNLLY. A helical membrane pass occupies residues 296-316; sequence FFYEIIDCFSMLHCVANPILY. At 317 to 395 the chain is on the cytoplasmic side; the sequence is NFLSPSFRGR…QTPHLHSAIL (79 aa). S329 is subject to Phosphoserine.

This sequence belongs to the G-protein coupled receptor 1 family. Expressed in liver and lung.

The protein localises to the cell membrane. Orphan receptor. The sequence is that of G-protein coupled receptor 182 (Gpr182) from Mus musculus (Mouse).